Here is a 238-residue protein sequence, read N- to C-terminus: Fatty acid metabolism regulator protein (238 aa).

Residues 6 to 74 (KGPASFAEKY…HGKPTRVNNF (69 aa)) form the HTH gntR-type domain. Positions 34-53 (ERELSELIGVTRTTLREVLQ) form a DNA-binding region, H-T-H motif.

As to quaternary structure, homodimer.

Its subcellular location is the cytoplasm. In terms of biological role, multifunctional regulator of fatty acid metabolism. The sequence is that of Fatty acid metabolism regulator protein from Shewanella putrefaciens (strain CN-32 / ATCC BAA-453).